Reading from the N-terminus, the 296-residue chain is NADPH-dependent 1-acyldihydroxyacetone phosphate reductase (296 aa).

I9 contacts NADP(+). Positions 11–15 match the GXSXG motif; it reads GCSEG. The NADP(+) site is built by T35, R41, D56, N84, K117, Y148, K152, V181, and T183. Y148 (proton donor) is an active-site residue. Catalysis depends on K152, which acts as the Lowers pKa of active site Tyr.

The protein belongs to the short-chain dehydrogenases/reductases (SDR) family.

The protein resides in the lipid droplet. It localises to the cytoplasm. The protein localises to the vacuole. It is found in the endoplasmic reticulum. Its subcellular location is the golgi apparatus. The protein resides in the mitochondrion outer membrane. The enzyme catalyses 1-hexadecanoyl-sn-glycero-3-phosphate + NADP(+) = 1-hexadecanoylglycerone 3-phosphate + NADPH + H(+). It carries out the reaction a 1-acylglycerone 3-phosphate + NADPH + H(+) = a 1-acyl-sn-glycero-3-phosphate + NADP(+). It catalyses the reaction a triacylglycerol + H2O = a diacylglycerol + a fatty acid + H(+). Its function is as follows. Can convert acyl and alkyl dihydroxyacetone-phosphate (DHAP) into glycerolipids and ether lipids, respectively. Required for the biosynthesis of phosphatidic acid via the DHAP pathway, where it reduces 1-acyl DHAP to lysophosphatidic acid (LPA). Also has triacylglycerol (TAG) lipase activity. Involved in the mobilization of the non-polar storage lipids triacylglycerols (TAGs) from lipid particles by hydrolysis of TAGs. Lipolysis of TAG by AYR1 is essential for starvation-induced autophagy. Forms an NADPH-regulated cation-selective channel in the mitochondrial outer membrane. This Schizosaccharomyces pombe (strain 972 / ATCC 24843) (Fission yeast) protein is NADPH-dependent 1-acyldihydroxyacetone phosphate reductase (ayr1).